A 935-amino-acid polypeptide reads, in one-letter code: Protocadherin gamma-A11 (935 aa).

Residues 1–29 form the signal peptide; that stretch reads MANRLQRGDRSRLLLLLCIFLGTLRGFRA. Cadherin domains lie at 30–134, 135–243, 244–348, 349–453, 454–563, and 571–677; these read RQIR…APSF, QEDE…IPMF, TQSV…APEI, TITS…PPVF, PHSS…APEI, and DGST…ADLG. Residues 30 to 693 are Extracellular-facing; that stretch reads RQIRYSVPEE…NSEASDLSLY (664 aa). Asparagine 48 carries N-linked (GlcNAc...) asparagine glycosylation. N-linked (GlcNAc...) asparagine glycans are attached at residues asparagine 255, asparagine 266, asparagine 420, and asparagine 546. The chain crosses the membrane as a helical span at residues 694 to 714; that stretch reads LVVAVAAVSCIFLVFVIVLLA. The Cytoplasmic segment spans residues 715 to 935; the sequence is LRLWRWHKSR…KKKSGKKEKK (221 aa). Disordered regions lie at residues 805–844 and 905–935; these read CDPTSNQQAPPNTDWRFSQAQRPGTSGSQNGDDTGTWPNN and ATLTNAAGKRDGKAPAGGNGNKKKSGKKEKK. Polar residues predominate over residues 807–844; that stretch reads PTSNQQAPPNTDWRFSQAQRPGTSGSQNGDDTGTWPNN. The span at 925-935 shows a compositional bias: basic residues; the sequence is NKKKSGKKEKK.

It localises to the cell membrane. Potential calcium-dependent cell-adhesion protein. May be involved in the establishment and maintenance of specific neuronal connections in the brain. In Pan troglodytes (Chimpanzee), this protein is Protocadherin gamma-A11 (PCDHGA11).